The following is a 232-amino-acid chain: (S)-2-haloacid dehalogenase (232 aa).

Catalysis depends on Asp10, which acts as the Nucleophile. Residues 11–12 (LY), Arg41, and 118–119 (SN) contribute to the an (S)-2-haloacid site. The important for catalytic activity stretch occupies residues 175-180 (SSNAWD).

This sequence belongs to the HAD-like hydrolase superfamily. S-2-haloalkanoic acid dehalogenase family. As to quaternary structure, homodimer.

It carries out the reaction an (S)-2-haloacid + H2O = a (2R)-2-hydroxycarboxylate + a halide anion + H(+). The enzyme catalyses (S)-2-chloropropanoate + H2O = (R)-lactate + chloride + H(+). In terms of biological role, catalyzes the hydrolytic dehalogenation of small (S)-2-haloalkanoic acids to yield the corresponding (R)-2-hydroxyalkanoic acids. Acts on acids of short chain lengths, C(2) to C(4), with inversion of configuration at C-2. Active with 2-halogenated carboxylic acids and converts only the S-isomer (or L-isomer) of 2-chloropropionic acid with inversion of configuration to produce R-lactate (or D-isomer). This is (S)-2-haloacid dehalogenase from Pseudomonas sp. (strain YL).